A 70-amino-acid polypeptide reads, in one-letter code: Protein FlmC homolog (70 aa).

A disordered region spans residues 1 to 21 (MSSPHQDSLLPRFAQGEEGHE).

This chain is Protein FlmC homolog, found in Escherichia coli.